A 747-amino-acid chain; its full sequence is Putative T-box protein 31 (747 aa).

A DNA-binding region (T-box) is located at residues 33 to 199 (QMLTKRKKTN…AGPAAKKTPD (167 aa)). Disordered regions lie at residues 268–289 (SLSS…DFDD) and 332–364 (SINN…VRDK). Residues 332–358 (SINNPGYLSTASSPAALNQDSSASEKS) show a composition bias toward polar residues.

Its subcellular location is the nucleus. The protein is Putative T-box protein 31 (tbx-31) of Caenorhabditis elegans.